The following is a 102-amino-acid chain: Integration host factor subunit beta (102 aa).

The protein belongs to the bacterial histone-like protein family. In terms of assembly, heterodimer of an alpha and a beta chain.

Functionally, this protein is one of the two subunits of integration host factor, a specific DNA-binding protein that functions in genetic recombination as well as in transcriptional and translational control. This Rhizobium radiobacter (Agrobacterium tumefaciens) protein is Integration host factor subunit beta (ihfB).